A 142-amino-acid chain; its full sequence is MVLGGLMKLFDEFKAFVMRGNVVDLAVGVIIGAAFGKIVTSLVNDIFMPIIGMIIGNIDFSSLVIKLGEPVEGAEQAAIRYGMFIQEIVNFLIIALCVFVAIKLINKLQKKKEEASAPAPGPTKEEVLLTEIRDALNKIAEK.

Helical transmembrane passes span 15–35 (AFVM…GAAF), 38–58 (IVTS…IGNI), and 82–102 (GMFI…FVAI).

The protein belongs to the MscL family. As to quaternary structure, homopentamer.

Its subcellular location is the cell inner membrane. Channel that opens in response to stretch forces in the membrane lipid bilayer. May participate in the regulation of osmotic pressure changes within the cell. This Fusobacterium nucleatum subsp. nucleatum (strain ATCC 25586 / DSM 15643 / BCRC 10681 / CIP 101130 / JCM 8532 / KCTC 2640 / LMG 13131 / VPI 4355) protein is Large-conductance mechanosensitive channel.